Reading from the N-terminus, the 268-residue chain is Small ribosomal subunit protein eS1 (268 aa).

2 disordered regions span residues methionine 1–valine 21 and glycine 238–valine 268.

It belongs to the eukaryotic ribosomal protein eS1 family. Component of the small ribosomal subunit. Mature ribosomes consist of a small (40S) and a large (60S) subunit. The 40S subunit contains about 33 different proteins and 1 molecule of RNA (18S). The 60S subunit contains about 49 different proteins and 3 molecules of RNA (28S, 5.8S and 5S).

Its subcellular location is the cytoplasm. Its function is as follows. Essential for oogenesis; required for late follicle cell development. The chain is Small ribosomal subunit protein eS1 from Drosophila ananassae (Fruit fly).